The chain runs to 512 residues: Tyrosine-protein kinase Lyn (512 aa).

The tract at residues 1-50 (MGCIKSKRKDNLNDDGVDMKTQPVRNTDRTIYVRDPTSNKQQRPVPESQL) is disordered. The N-myristoyl glycine moiety is linked to residue G2. C3 is lipidated: S-palmitoyl cysteine. One can recognise an SH3 domain in the interval 63–123 (EQGDIVVALY…PSNYVAKVNT (61 aa)). The SH2 domain maps to 129–226 (WFFKDITRKD…GLCRRLEKAC (98 aa)). Y193 is subject to Phosphotyrosine. The residue at position 228 (S228) is a Phosphoserine. The 255-residue stretch at 247 to 501 (IKLVKKLGAG…YLQSVLDDFY (255 aa)) folds into the Protein kinase domain. ATP is bound by residues 253-261 (LGAGQFGEV) and K275. Residues Y306 and Y316 each carry the phosphotyrosine modification. D367 acts as the Proton acceptor in catalysis. Phosphotyrosine; by autocatalysis is present on Y397. Phosphotyrosine is present on residues Y460 and Y473. Phosphotyrosine; by autocatalysis, CSK and MATK is present on Y508.

Belongs to the protein kinase superfamily. Tyr protein kinase family. SRC subfamily. In terms of assembly, interacts with TEC. Interacts (via SH2 domain) with FLT3 (tyrosine phosphorylated). Interacts with LIME1 and with CD79A upon activation of the B-cell antigen receptor. Interacts with the B-cell receptor complex. Interacts with phosphorylated THEMIS2. Interacts with EPOR. Interacts with MS4A2/FCER1B. Interaction (via the SH2 and SH3 domains) with MUC1 is stimulated by IL7 and the subsequent phosphorylation increases the binding between MUC1 and CTNNB1/beta-catenin. Interacts with ADAM15. Interacts with NDFIP2 and more weakly with NDFIP1. Interacts with FASLG. Interacts with KIT. Interacts with HCLS1. Interacts with FCGR2B. Interacts with FCGR1A; the interaction may be indirect. Interacts with CD19, CD22, CD79A and CD79B. Interacts (via SH3 domain) with CBLC, PPP1R15A and PDE4A. Interacts with TGFB1I1. Interacts (via SH3 domain) with PIK3R1, the regulatory subunit of phosphatidylinositol 3-kinase; this interaction enhances phosphatidylinositol 3-kinase activity. Interacts with CSF2RB, the common subunit of the IL3, IL5 and CSF2 receptors. Interacts with PAG1; identified in a complex with PAG1 and STAT3. Interacts with ABL1. Interacts with PTPN6/SHP-1. Interacts (via SH3 domain) with SCIMP (via proline-rich region). This interaction facilitates the phosphorylation of SCIMP 'Tyr-96', which enhances binding of SCIMP to TLR4, and consequently the phosphorylation of TLR4 in response to stimulation by lipopolysaccharide in macrophages. Interacts with LPXN (via LD motif 3) and the interaction is induced upon B-cell antigen receptor (BCR) activation. Interacts (via SH3-domain) with ANKRD54 (via ankyrin repeat region) in an activation-independent status of LYN. Forms a multiprotein complex with ANKRD54 and HCLS1. Interacts (via SH2 and SH3 domains) with UNC119; leading to LYN activation. Interacts with CD36. Interacts with LYN. Interacts with SKAP1 and FYB1; this interaction promotes the phosphorylation of CLNK. Interacts with BCAR1/CAS and NEDD9/HEF1. Post-translationally, ubiquitinated. Ubiquitination is SH3-dependent. In terms of processing, autophosphorylated. Phosphorylated on tyrosine residues in response to KIT signaling. Phosphorylation at Tyr-397 is required for optimal activity. Phosphorylation at Tyr-508 inhibits kinase activity. Phosphorylated at Tyr-508 by CSK. Dephosphorylated by PTPRC/CD45. Becomes rapidly phosphorylated upon activation of the B-cell receptor and the immunoglobulin receptor FCGR1A. Phosphorylated in response to integrin ITGB1 in B-cells. As to expression, detected in spleen (at protein level). Expressed predominantly in B-lymphoid and myeloid cells.

The protein resides in the cell membrane. The protein localises to the nucleus. It is found in the cytoplasm. It localises to the perinuclear region. Its subcellular location is the golgi apparatus. The protein resides in the membrane. It catalyses the reaction L-tyrosyl-[protein] + ATP = O-phospho-L-tyrosyl-[protein] + ADP + H(+). Its activity is regulated as follows. Subject to autoinhibition, mediated by intramolecular interactions between the SH2 domain and the C-terminal phosphotyrosine. Phosphorylation at Tyr-397 is required for optimal activity. Phosphorylated by CSK at Tyr-508; phosphorylation at Tyr-508 inhibits kinase activity. Kinase activity is modulated by dephosphorylation by PTPRC/CD45. Non-receptor tyrosine-protein kinase that transmits signals from cell surface receptors and plays an important role in the regulation of innate and adaptive immune responses, hematopoiesis, responses to growth factors and cytokines, integrin signaling, but also responses to DNA damage and genotoxic agents. Functions primarily as negative regulator, but can also function as activator, depending on the context. Required for the initiation of the B-cell response, but also for its down-regulation and termination. Plays an important role in the regulation of B-cell differentiation, proliferation, survival and apoptosis, and is important for immune self-tolerance. Acts downstream of several immune receptors, including the B-cell receptor, CD79A, CD79B, CD5, CD19, CD22, FCER1, FCGR2, FCGR1A, TLR2 and TLR4. Plays a role in the inflammatory response to bacterial lipopolysaccharide. Mediates the responses to cytokines and growth factors in hematopoietic progenitors, platelets, erythrocytes, and in mature myeloid cells, such as dendritic cells, neutrophils and eosinophils. Acts downstream of EPOR, KIT, MPL, the chemokine receptor CXCR4, as well as the receptors for IL3, IL5 and CSF2. Plays an important role in integrin signaling. Regulates cell proliferation, survival, differentiation, migration, adhesion, degranulation, and cytokine release. Involved in the regulation of endothelial activation, neutrophil adhesion and transendothelial migration. Down-regulates signaling pathways by phosphorylation of immunoreceptor tyrosine-based inhibitory motifs (ITIM), that then serve as binding sites for phosphatases, such as PTPN6/SHP-1, PTPN11/SHP-2 and INPP5D/SHIP-1, that modulate signaling by dephosphorylation of kinases and their substrates. Phosphorylates LIME1 in response to CD22 activation. Phosphorylates BTK, CBL, CD5, CD19, CD72, CD79A, CD79B, CSF2RB, DOK1, HCLS1, LILRB3/PIR-B, MS4A2/FCER1B, SYK and TEC. Promotes phosphorylation of SIRPA, PTPN6/SHP-1, PTPN11/SHP-2 and INPP5D/SHIP-1. Required for rapid phosphorylation of FER in response to FCER1 activation. Mediates KIT phosphorylation. Acts as an effector of EPOR (erythropoietin receptor) in controlling KIT expression and may play a role in erythroid differentiation during the switch between proliferation and maturation. Depending on the context, activates or inhibits several signaling cascades. Regulates phosphatidylinositol 3-kinase activity and AKT1 activation. Regulates activation of the MAP kinase signaling cascade, including activation of MAP2K1/MEK1, MAPK1/ERK2, MAPK3/ERK1, MAPK8/JNK1 and MAPK9/JNK2. Mediates activation of STAT5A and/or STAT5B. Phosphorylates LPXN on 'Tyr-72'. Kinase activity facilitates TLR4-TLR6 heterodimerization and signal initiation. Phosphorylates SCIMP on 'Tyr-96'; this enhances binding of SCIMP to TLR4, promoting the phosphorylation of TLR4, and a selective cytokine response to lipopolysaccharide in macrophages. Phosphorylates CLNK. Phosphorylates BCAR1/CAS and NEDD9/HEF1. The polypeptide is Tyrosine-protein kinase Lyn (Lyn) (Rattus norvegicus (Rat)).